Reading from the N-terminus, the 599-residue chain is Elongation factor 4 (599 aa).

A tr-type G domain is found at 2-185 (KYIRNFSIIA…RIIIDIPVPQ (184 aa)). Residues 14–19 (NHGKST) and 132–135 (NKID) contribute to the GTP site.

Belongs to the TRAFAC class translation factor GTPase superfamily. Classic translation factor GTPase family. LepA subfamily.

The protein resides in the cell inner membrane. It carries out the reaction GTP + H2O = GDP + phosphate + H(+). Its function is as follows. Required for accurate and efficient protein synthesis under certain stress conditions. May act as a fidelity factor of the translation reaction, by catalyzing a one-codon backward translocation of tRNAs on improperly translocated ribosomes. Back-translocation proceeds from a post-translocation (POST) complex to a pre-translocation (PRE) complex, thus giving elongation factor G a second chance to translocate the tRNAs correctly. Binds to ribosomes in a GTP-dependent manner. This chain is Elongation factor 4, found in Blochmanniella floridana.